The primary structure comprises 438 residues: uncharacterized protein (438 aa).

Transmembrane regions (helical) follow at residues 22–42, 59–79, 89–109, 137–157, 174–194, 237–257, 258–278, 292–312, 330–350, 356–376, 380–400, and 418–438; these read VSPI…GGFG, SAAL…AGLF, IVKG…MLIA, MVMA…TPWG, FFVP…FLAF, LIYL…LGTK, HPSV…YPNV, AITV…LSGT, MGGF…FVLS, FGMV…PVEI, SIMG…VLLV, and AVIT…ITIL.

Belongs to the CitM (TC 2.A.11) transporter family.

It localises to the cell membrane. Transports the free citrate anion. This is an uncharacterized protein from Bacillus subtilis (strain 168).